A 462-amino-acid polypeptide reads, in one-letter code: UDP-N-acetylmuramoylalanine--D-glutamate ligase (462 aa).

109 to 115 serves as a coordination point for ATP; the sequence is GTDGKST.

The protein belongs to the MurCDEF family.

The protein resides in the cytoplasm. It carries out the reaction UDP-N-acetyl-alpha-D-muramoyl-L-alanine + D-glutamate + ATP = UDP-N-acetyl-alpha-D-muramoyl-L-alanyl-D-glutamate + ADP + phosphate + H(+). Its pathway is cell wall biogenesis; peptidoglycan biosynthesis. Cell wall formation. Catalyzes the addition of glutamate to the nucleotide precursor UDP-N-acetylmuramoyl-L-alanine (UMA). This is UDP-N-acetylmuramoylalanine--D-glutamate ligase from Leptospira borgpetersenii serovar Hardjo-bovis (strain JB197).